The primary structure comprises 320 residues: Cytochrome f (320 aa).

The first 36 residues, 1–36 (MKHTNSKQKLKDIINFCQAIFTLCIICLYQANISNS), serve as a signal peptide directing secretion. Residues tyrosine 37, cysteine 57, cysteine 60, and histidine 61 each coordinate heme. Residues 286–305 (LISFIFFSISVLISQLFFVL) traverse the membrane as a helical segment.

It belongs to the cytochrome f family. As to quaternary structure, the 4 large subunits of the cytochrome b6-f complex are cytochrome b6, subunit IV (17 kDa polypeptide, petD), cytochrome f and the Rieske protein, while the 4 small subunits are PetG, PetL, PetM and PetN. The complex functions as a dimer. It depends on heme as a cofactor.

It is found in the plastid. The protein localises to the chloroplast thylakoid membrane. In terms of biological role, component of the cytochrome b6-f complex, which mediates electron transfer between photosystem II (PSII) and photosystem I (PSI), cyclic electron flow around PSI, and state transitions. This Cyanidium caldarium (Red alga) protein is Cytochrome f (petA).